We begin with the raw amino-acid sequence, 201 residues long: Recombination protein RecR (201 aa).

A C4-type zinc finger spans residues 60–75 (CSCCGNVDTIDPCTVC). The Toprim domain occupies 83–178 (SVIIVVEDVS…KITRLAHGVP (96 aa)).

Belongs to the RecR family.

May play a role in DNA repair. It seems to be involved in an RecBC-independent recombinational process of DNA repair. It may act with RecF and RecO. This chain is Recombination protein RecR, found in Agrobacterium fabrum (strain C58 / ATCC 33970) (Agrobacterium tumefaciens (strain C58)).